The sequence spans 440 residues: D-serine dehydratase (440 aa).

At lysine 116 the chain carries N6-(pyridoxal phosphate)lysine.

It belongs to the serine/threonine dehydratase family. DsdA subfamily. As to quaternary structure, monomer. Pyridoxal 5'-phosphate serves as cofactor.

It catalyses the reaction D-serine = pyruvate + NH4(+). The chain is D-serine dehydratase from Salmonella schwarzengrund (strain CVM19633).